The sequence spans 247 residues: Orotidine 5'-phosphate decarboxylase (247 aa).

Substrate-binding positions include Asp22, Lys44, 71-80 (DLKFHDIPNT), Thr131, Arg192, Gln201, Gly221, and Arg222. The active-site Proton donor is Lys73.

The protein belongs to the OMP decarboxylase family. Type 1 subfamily. As to quaternary structure, homodimer.

It carries out the reaction orotidine 5'-phosphate + H(+) = UMP + CO2. It functions in the pathway pyrimidine metabolism; UMP biosynthesis via de novo pathway; UMP from orotate: step 2/2. Functionally, catalyzes the decarboxylation of orotidine 5'-monophosphate (OMP) to uridine 5'-monophosphate (UMP). This is Orotidine 5'-phosphate decarboxylase from Pectobacterium atrosepticum (strain SCRI 1043 / ATCC BAA-672) (Erwinia carotovora subsp. atroseptica).